The sequence spans 1253 residues: MKKTLQDEIEAILRKRIMVLDGGMGTMIQRYKLSEEHFQGQEFKDHSRPLKGNNDILSITQPDIIYQIHKEYLLAGADIIETNTFSSTSIAQADYGLEHLAYRMNKCSADVARKAAEEITLQTGVKRFVAGALGPTNKTLSVSPSVERPDYRNITFDELVDAYQEQAKGLLDGRVDILLIETIFDTANAKAALFAIQNLFEENYAPPRPIFISGTIVDKSGRTLSGQTGEAFVTSVSHSDPLCIGLNCSLGAAEMRPFIETIGKCTTAYVLCYPNAGLPNTFGDYDETPSTMATHLKDFAVDGLVNIVGGCCGSTPDHIREIAEAVKKCKPRVPPASVFEGHMLLSGLEPFRIGPYTNFVNIGERCNVAGSRKFAKLIMAGNYEEALSIAKAQVEMGAQVLDINMDDGMLDGPSAMTRFCNSIASEPDIAKVPLCIDSSNFAVIEAGLKCCQGKCIVNSISLKEGEGDFLEKARKIKKFGAAVVVMAFDEEGQATETDVKVNVCTRAYHLLVDKVGFNPNDIIFDPNILTIGTGMEEHNLYAINFIHATRVIKETLPGVRISGGLSNLSFSFRGMEAIREAMHGVFLYHAIKFGMDMGIVNAGNLPVYDAIHKDLLQLCEDLIWNKDSEATEKLLRYAQTHGTGGKKVIQTDEWRNGSIEERLEYALVKGIEKHIVEDTEEARLNGEKYPRPLNIIEGPLMNGMKVVGDLFGAGKMFLPQVIKSARVMKKAVGHLIPFMEKEREEARLINGSVEEEDPYQGTIVLATVKGDVHDIGKNIVGVVLACNNFRVIDLGVMTPCDKILQAALDHKADIIGLSGLITPSLDEMIFVAKEMERLAIKIPLLIGGATTSRTHTAVKIAPRYSAPVIHVLDASKSVVVCSQLLDENLRDDYFEEILEEYEDIRQDHYESLKERKYVPLSQARKHGFHIDWLSEPHPVKPTFIGTQVFEDYNLQKLVDYIDWKPFFDVWQLRGKYPNRGFPKIFNDKAVGEEARKVYNDAQNMLNILISQKKLQARGVVGFWPAQSVQDDIHLYAEGVVPQAAEPIATFYGLRQQAEKDSSSTDPYHCLSDFIAPLHSGVCDYLGLFAVACFGVEELSKTYEDDGDDYSSIMVKALGDRLAEAFAEELHERVRRELWAYSRSEQLGVPDLRRLRYEGIRPAPGYPSQPDHTEKLTMWRLASIEQATGIRLTESLAMAPASAVSGLYFSNVKAKYFAVGKISKDQTEDYALRKNMPVAEVEKWLGPILGYDTD.

Positions 6–326 constitute a Hcy-binding domain; it reads QDEIEAILRK…DHIREIAEAV (321 aa). Cys-248, Cys-311, and Cys-312 together coordinate Zn(2+). Residues 359 to 620 enclose the Pterin-binding domain; it reads FVNIGERCNV…IHKDLLQLCE (262 aa). Residues 370 to 372, Asp-437, Asn-458, Asp-525, Asn-567, Arg-573, and Arg-579 each bind (6S)-5,6,7,8-tetrahydrofolate; that span reads GSR. Residues 650-747 enclose the B12-binding N-terminal domain; it reads QTDEWRNGSI…FMEKEREEAR (98 aa). Residues Glu-697, 770 to 774, His-773, Ser-818, Thr-822, and Ala-874 each bind methylcob(III)alamin; that span reads GDVHD. Residues 760 to 895 enclose the B12-binding domain; that stretch reads QGTIVLATVK…DENLRDDYFE (136 aa). Residues 911–1253 enclose the AdoMet activation domain; that stretch reads SLKERKYVPL…LGPILGYDTD (343 aa). S-adenosyl-L-methionine-binding positions include Asp-962, Arg-1160, and 1215–1216; that span reads YF. Thr-1252 carries the post-translational modification Phosphothreonine.

The protein belongs to the vitamin-B12 dependent methionine synthase family. As to quaternary structure, monomer. Dimer. Forms a multiprotein complex with MMACHC, MMADHC and MTRR. Methylcob(III)alamin is required as a cofactor. Requires Zn(2+) as cofactor.

Its subcellular location is the cytoplasm. The enzyme catalyses (6S)-5-methyl-5,6,7,8-tetrahydrofolate + L-homocysteine = (6S)-5,6,7,8-tetrahydrofolate + L-methionine. Its pathway is amino-acid biosynthesis; L-methionine biosynthesis via de novo pathway; L-methionine from L-homocysteine (MetH route): step 1/1. Its function is as follows. Catalyzes the transfer of a methyl group from methylcob(III)alamin (MeCbl) to homocysteine, yielding enzyme-bound cob(I)alamin and methionine in the cytosol. MeCbl is an active form of cobalamin (vitamin B12) used as a cofactor for methionine biosynthesis. Cob(I)alamin form is regenerated to MeCbl by a transfer of a methyl group from 5-methyltetrahydrofolate. The processing of cobalamin in the cytosol occurs in a multiprotein complex composed of at least MMACHC, MMADHC, MTRR (methionine synthase reductase) and MTR which may contribute to shuttle safely and efficiently cobalamin towards MTR in order to produce methionine. This Mus musculus (Mouse) protein is Methionine synthase.